The sequence spans 858 residues: Toll-like receptor 5 (858 aa).

The signal sequence occupies residues 1–20 (MGDHLDLLLGVVLMAGPVFG). Residues 21–639 (IPSCSFDGRI…DEEEVLKSLK (619 aa)) are Extracellular-facing. Asn37 and Asn46 each carry an N-linked (GlcNAc...) asparagine glycan. LRR repeat units lie at residues 45–68 (LNTT…SFPF), 71–93 (QLQL…AFRN), 95–117 (PNLR…AFQG), 120–143 (HLFE…YFRN), 146–166 (ALTR…HPSF), 171–192 (SLKS…ELEP), 197–211 (TLSF…LYSR), 214–229 (VDWG…MVLE), and 234–235 (SG). Asn245 carries an N-linked (GlcNAc...) asparagine glycan. LRR repeat units lie at residues 260-284 (LAHH…TFAG), 289-301 (SVRH…GFVF), 313-334 (DLKV…AFYG), 337-355 (NLQV…YSSN), 385-401 (KLQT…TIHF), 412-431 (GNKL…IHLS), 449-470 (HLQI…QTPS), 474-495 (SLEQ…ELCW), 503-524 (HLQV…VFSH), 527-546 (ALRG…HNDL), and 549-567 (NLEI…NPDV). Residue Asn342 is glycosylated (N-linked (GlcNAc...) asparagine). Asn422 carries N-linked (GlcNAc...) asparagine glycosylation. Positions 579–631 (NKFICECELSTFINWLNHTNVTIAGPPADIYCVYPDSFSGVSLFSLSTEGCDE) constitute an LRRCT domain. Disulfide bonds link Cys583–Cys610 and Cys585–Cys629. N-linked (GlcNAc...) asparagine glycans are attached at residues Asn595 and Asn598. Residues 640–660 (FSLFIVCTVTLTLFLMTILTV) form a helical membrane-spanning segment. The Cytoplasmic segment spans residues 661–858 (TKFRGFCFIC…IPLQTVATIS (198 aa)). The region spanning 691-836 (YKYDAYLCFS…WFLHKLSQQI (146 aa)) is the TIR domain. Tyr798 carries the phosphotyrosine modification. The residue at position 805 (Ser805) is a Phosphoserine; by PKD/PRKD1.

It belongs to the Toll-like receptor family. Homodimer. Interacts with MYD88 (via TIR domain). Interacts with TICAM1 (via TIR domain). Interacts with UNC93B1; this interaction is essential for proper TLR5 localization to the plasma membrane. Post-translationally, phosphorylated at Ser-805 by PKD/PRKD1; phosphorylation induces the production of inflammatory cytokines. Phosphorylated at Tyr-798 upon flagellin binding; required for signaling. In terms of tissue distribution, highly expressed on the basolateral surface of intestinal epithelia. Expressed also in other cells such as lung epithelial cells.

It localises to the cell membrane. In terms of biological role, pattern recognition receptor (PRR) located on the cell surface that participates in the activation of innate immunity and inflammatory response. Recognizes small molecular motifs named pathogen-associated molecular pattern (PAMPs) expressed by pathogens and microbe-associated molecular patterns (MAMPs) usually expressed by resident microbiota. Upon ligand binding such as bacterial flagellins, recruits intracellular adapter proteins MYD88 and TRIF leading to NF-kappa-B activation, cytokine secretion and induction of the inflammatory response. Plays thereby an important role in the relationship between the intestinal epithelium and enteric microbes and contributes to the gut microbiota composition throughout life. This Homo sapiens (Human) protein is Toll-like receptor 5 (TLR5).